A 65-amino-acid polypeptide reads, in one-letter code: ARDGYIANDRNCVYTCALNPYCDSECKKNGADSGYCQWFGRFGNACWCKNLPDKVPIRIPGECRG.

Positions 2–64 (RDGYIANDRN…VPIRIPGECR (63 aa)) constitute an LCN-type CS-alpha/beta domain. 4 disulfide bridges follow: Cys-12/Cys-63, Cys-16/Cys-36, Cys-22/Cys-46, and Cys-26/Cys-48. An Arginine amide modification is found at Arg-64.

It belongs to the long (4 C-C) scorpion toxin superfamily. Sodium channel inhibitor family. Alpha subfamily. Expressed by the venom gland.

It localises to the secreted. In terms of biological role, alpha toxins bind voltage-independently at site-3 of sodium channels (Nav) and inhibit the inactivation of the activated channels, thereby blocking neuronal transmission. The chain is Sodium channel neurotoxin MeuNaTxalpha-9 from Mesobuthus eupeus (Lesser Asian scorpion).